A 129-amino-acid polypeptide reads, in one-letter code: Glycerol-3-phosphate cytidylyltransferase (129 aa).

Residues 9–10 and 14–17 contribute to the CTP site; these read TF and HYGH. Lys44 provides a ligand contact to substrate. Lys46 contacts CTP. Lys77 is a binding site for substrate. A CTP-binding site is contributed by 113-120; the sequence is RTDGISTT.

The protein belongs to the cytidylyltransferase family. As to quaternary structure, homodimer.

The protein resides in the cytoplasm. The catalysed reaction is sn-glycerol 3-phosphate + CTP + H(+) = CDP-glycerol + diphosphate. It participates in cell wall biogenesis; poly(ribitol phosphate) teichoic acid biosynthesis. In terms of biological role, catalyzes the transfer of the cytidylyl group of CTP to sn-glycerol 3-phosphate so the activated glycerol 3-phosphate can be used for teichoic acid synthesis, via incorporation into both the linkage unit by TarB and TarF. The sequence is that of Glycerol-3-phosphate cytidylyltransferase (tarD) from Bacillus spizizenii (strain ATCC 23059 / NRRL B-14472 / W23) (Bacillus subtilis subsp. spizizenii).